The primary structure comprises 372 residues: Glutamate 5-kinase (372 aa).

ATP is bound at residue lysine 14. Substrate-binding residues include serine 54, aspartate 141, and asparagine 153. Residue 173 to 174 (TD) participates in ATP binding. The 79-residue stretch at 280–358 (RGTLVLDDGA…EAIVRELGYM (79 aa)) folds into the PUA domain.

It belongs to the glutamate 5-kinase family.

The protein localises to the cytoplasm. The enzyme catalyses L-glutamate + ATP = L-glutamyl 5-phosphate + ADP. Its pathway is amino-acid biosynthesis; L-proline biosynthesis; L-glutamate 5-semialdehyde from L-glutamate: step 1/2. Its function is as follows. Catalyzes the transfer of a phosphate group to glutamate to form L-glutamate 5-phosphate. The sequence is that of Glutamate 5-kinase from Pseudomonas syringae pv. tomato (strain ATCC BAA-871 / DC3000).